Here is a 754-residue protein sequence, read N- to C-terminus: Glutathione biosynthesis bifunctional protein GshAB (754 aa).

The glutamate--cysteine ligase stretch occupies residues 1–332 (MTLNQLLQKL…QGHALNEKIA (332 aa)). In terms of domain architecture, ATP-grasp spans 488-746 (KKILADAGFP…ITTKILDKLF (259 aa)). 515 to 573 (PLIKDKQIVVKPKSTNFGLGISIFQEPASLDNYQKALEIAFAEDTSVLVEEFIPGTEYR) lines the ATP pocket. 3 residues coordinate Mg(2+): aspartate 695, glutamate 716, and asparagine 718. Mn(2+) contacts are provided by aspartate 695, glutamate 716, and asparagine 718.

The protein in the N-terminal section; belongs to the glutamate--cysteine ligase type 1 family. Type 2 subfamily. As to quaternary structure, monomer. The cofactor is Mg(2+). It depends on Mn(2+) as a cofactor.

The catalysed reaction is L-cysteine + L-glutamate + ATP = gamma-L-glutamyl-L-cysteine + ADP + phosphate + H(+). The enzyme catalyses gamma-L-glutamyl-L-cysteine + glycine + ATP = glutathione + ADP + phosphate + H(+). It participates in sulfur metabolism; glutathione biosynthesis; glutathione from L-cysteine and L-glutamate: step 1/2. The protein operates within sulfur metabolism; glutathione biosynthesis; glutathione from L-cysteine and L-glutamate: step 2/2. Functionally, synthesizes glutathione from L-glutamate and L-cysteine via gamma-L-glutamyl-L-cysteine. The chain is Glutathione biosynthesis bifunctional protein GshAB from Streptococcus thermophilus (strain CNRZ 1066).